A 285-amino-acid chain; its full sequence is Ribose-phosphate pyrophosphokinase (285 aa).

ATP contacts are provided by residues 33-35 and 91-92; these read DGE and RQ. Residues His125 and Asp162 each coordinate Mg(2+). Lys185 is a catalytic residue. D-ribose 5-phosphate is bound by residues Arg187, Asp211, and 215-219; that span reads STGGT.

It belongs to the ribose-phosphate pyrophosphokinase family. Class III (archaeal) subfamily. The cofactor is Mg(2+).

It is found in the cytoplasm. It carries out the reaction D-ribose 5-phosphate + ATP = 5-phospho-alpha-D-ribose 1-diphosphate + AMP + H(+). It functions in the pathway metabolic intermediate biosynthesis; 5-phospho-alpha-D-ribose 1-diphosphate biosynthesis; 5-phospho-alpha-D-ribose 1-diphosphate from D-ribose 5-phosphate (route I): step 1/1. Involved in the biosynthesis of the central metabolite phospho-alpha-D-ribosyl-1-pyrophosphate (PRPP) via the transfer of pyrophosphoryl group from ATP to 1-hydroxyl of ribose-5-phosphate (Rib-5-P). The chain is Ribose-phosphate pyrophosphokinase from Methanothermobacter thermautotrophicus (strain ATCC 29096 / DSM 1053 / JCM 10044 / NBRC 100330 / Delta H) (Methanobacterium thermoautotrophicum).